The chain runs to 492 residues: Catalase isozyme 1 (492 aa).

Catalysis depends on residues H65 and N138. Residue Y348 coordinates heme.

It belongs to the catalase family. Homotetramer. It depends on heme as a cofactor.

The protein resides in the peroxisome. The catalysed reaction is 2 H2O2 = O2 + 2 H2O. Occurs in almost all aerobically respiring organisms and serves to protect cells from the toxic effects of hydrogen peroxide. The protein is Catalase isozyme 1 (CAT1) of Gossypium hirsutum (Upland cotton).